The chain runs to 107 residues: Regulatory protein SoxS (107 aa).

The region spanning 8-106 (QDLIAWIDEH…DRTPSDYRHR (99 aa)) is the HTH araC/xylS-type domain. DNA-binding regions (H-T-H motif) lie at residues 25 to 46 (DVVA…RTVT) and 73 to 96 (IFDI…RRQF).

The protein resides in the cytoplasm. Its function is as follows. Transcriptional activator of the superoxide response regulon of E.coli that includes at least 10 genes such as sodA, nfo, zwf and micF. Binds the DNA sequence 5'-GCACN(7)CAA-3'. It also facilitates the subsequent binding of RNA polymerase to the micF and the nfo promoters. The protein is Regulatory protein SoxS (soxS) of Escherichia coli O157:H7.